Consider the following 366-residue polypeptide: Septin-1 (366 aa).

A Septin-type G domain is found at 22–295; it reads KGFDFTLMVA…EGYRARCLQS (274 aa). Residues 32-39 form a G1 motif region; the sequence is GESGLGKS. Residues 32 to 39, Thr66, Gly92, and 171 to 179 contribute to the GTP site; these read GESGLGKS and KADALLPRE. The tract at residues 89 to 92 is G3 motif; that stretch reads DTPG. The G4 motif stretch occupies residues 170 to 173; it reads GKAD. A Phosphoserine modification is found at Ser206. GTP contacts are provided by Gly229 and Arg244. The residue at position 247 (Ser247) is a Phosphoserine; by AURKB. At Thr250 the chain carries Phosphothreonine. A phosphoserine; by AURKB mark is found at Ser306 and Ser314. Positions 347–366 are disordered; sequence EKMQAQMQQSQAQGEQSDVL. The segment covering 349–366 has biased composition (low complexity); sequence MQAQMQQSQAQGEQSDVL.

The protein belongs to the TRAFAC class TrmE-Era-EngA-EngB-Septin-like GTPase superfamily. Septin GTPase family. In terms of assembly, septins polymerize into heterooligomeric protein complexes that form filaments, and can associate with cellular membranes, actin filaments and microtubules. GTPase activity is required for filament formation. Interacts with AURKB.

Its subcellular location is the cytoplasm. It is found in the cytoskeleton. It localises to the microtubule organizing center. The protein resides in the centrosome. The protein localises to the midbody. Filament-forming cytoskeletal GTPase. May play a role in cytokinesis (Potential). The sequence is that of Septin-1 from Rattus norvegicus (Rat).